Here is a 679-residue protein sequence, read N- to C-terminus: DNA ligase (679 aa).

Residues 86 to 90 (DEAYD) and 129 to 130 (ST) each bind NAD(+). The active-site N6-AMP-lysine intermediate is K167. NAD(+)-binding residues include R183, E214, and K326. The Zn(2+) site is built by C417, C420, C433, and C439. The BRCT domain maps to 599–679 (GEKSPISGKT…EAYRQLVSLD (81 aa)).

The protein belongs to the NAD-dependent DNA ligase family. LigA subfamily. It depends on Mg(2+) as a cofactor. Mn(2+) is required as a cofactor.

It carries out the reaction NAD(+) + (deoxyribonucleotide)n-3'-hydroxyl + 5'-phospho-(deoxyribonucleotide)m = (deoxyribonucleotide)n+m + AMP + beta-nicotinamide D-nucleotide.. In terms of biological role, DNA ligase that catalyzes the formation of phosphodiester linkages between 5'-phosphoryl and 3'-hydroxyl groups in double-stranded DNA using NAD as a coenzyme and as the energy source for the reaction. It is essential for DNA replication and repair of damaged DNA. The protein is DNA ligase of Desulfotalea psychrophila (strain LSv54 / DSM 12343).